We begin with the raw amino-acid sequence, 640 residues long: uncharacterized protein (640 aa).

The 145-residue stretch at 184-328 (VKRDTIFIIK…KVQRSIDTMI (145 aa)) folds into the TIR domain. A disordered region spans residues 613–640 (LPNDLDDEDEELDDSTLGRPDSDEEGGE). Residues 616–626 (DLDDEDEELDD) show a composition bias toward acidic residues.

This is an uncharacterized protein from Sinorhizobium fredii (strain NBRC 101917 / NGR234).